A 142-amino-acid polypeptide reads, in one-letter code: Hemoglobin subunit alpha-1 (142 aa).

Ser1 is modified (N-acetylserine). The Globin domain occupies 1–142 (SLSVKDKAAV…VALALAERYR (142 aa)). His59 provides a ligand contact to O2. His88 lines the heme b pocket.

This sequence belongs to the globin family. Hb 1 is a heterotetramer of two alpha-1 and two beta-1 chains. In terms of tissue distribution, red blood cells.

In terms of biological role, involved in oxygen transport from gills to the various peripheral tissues. In Gobionotothen gibberifrons (Humped rockcod), this protein is Hemoglobin subunit alpha-1 (hba1).